Here is a 351-residue protein sequence, read N- to C-terminus: Ferrochelatase (351 aa).

His-184 and Glu-265 together coordinate Fe cation.

This sequence belongs to the ferrochelatase family.

It localises to the cytoplasm. The catalysed reaction is heme b + 2 H(+) = protoporphyrin IX + Fe(2+). It participates in porphyrin-containing compound metabolism; protoheme biosynthesis; protoheme from protoporphyrin-IX: step 1/1. Its function is as follows. Catalyzes the ferrous insertion into protoporphyrin IX. This Rhodopirellula baltica (strain DSM 10527 / NCIMB 13988 / SH1) protein is Ferrochelatase.